Here is an 80-residue protein sequence, read N- to C-terminus: HssA/B-like protein 2 (80 aa).

The interval 1 to 29 is disordered; that stretch reads MSLLSALTSISKPMNTSSKSSVSSKNVSG. The span at 9 to 29 shows a compositional bias: low complexity; that stretch reads SISKPMNTSSKSSVSSKNVSG.

This sequence belongs to the hssA/B family.

This is HssA/B-like protein 2 (hssl2) from Dictyostelium discoideum (Social amoeba).